The following is a 432-amino-acid chain: MSSTTLTDDQIRDNERTEVLAKATAAKNIVPDIAVLGTGPKNAILRAAADELVARSAEIIEANASDIEAGRANGMEESMIDRLALDESRIEGIAGGLRQVAGLTDPVGEVLRGHVMENGIQMKQVRVPLGVMGMVYEARPNVTVDAFGLALKSGNVALLRGSSTAVHSNTKLVEILQDVLERFELPRETVQLLPCQTRGSVQDLITARGLVDVVIPRGGAGLINAVVTGATVPTIETGTGNCHFYIDAEAKLDQAIAMVINGKTRRCSVCNATETALLDAALSDSDKLAVVQALQEAGVTIHGRVAELEAFGATDVVEATETDWDSEYLSFDIAVAVVDGVDGALAHIAKYSTKHTEAIATQNIETAQRFADRVDAAAVMINASTAYTDGEQYGMGAEIGISTQKLHARGPMALPELTSTKWILQGTGQIRP.

This sequence belongs to the gamma-glutamyl phosphate reductase family.

It localises to the cytoplasm. The enzyme catalyses L-glutamate 5-semialdehyde + phosphate + NADP(+) = L-glutamyl 5-phosphate + NADPH + H(+). It functions in the pathway amino-acid biosynthesis; L-proline biosynthesis; L-glutamate 5-semialdehyde from L-glutamate: step 2/2. Its function is as follows. Catalyzes the NADPH-dependent reduction of L-glutamate 5-phosphate into L-glutamate 5-semialdehyde and phosphate. The product spontaneously undergoes cyclization to form 1-pyrroline-5-carboxylate. This Corynebacterium glutamicum (strain R) protein is Gamma-glutamyl phosphate reductase.